We begin with the raw amino-acid sequence, 298 residues long: MSDQALSFLKDFLAGGVAAAISKTAVAPIERVKLLLQVQHASKQISAEKQYKGIIDCVVRIPKEQGFLSFWRGNLANVIRYFPTQALNFAFKDKYKQIFLGGVDRHKQFWRYFAGNLASGGAAGATSLCFVYPLDFARTRLAADVGKGAAQREFTGLGNCITKIFKSDGLRGLYQGFNVSVQGIIIYRAAYFGVYDTAKGMLPDPKNVHIIVSWMIAQTVTAVAGLVSYPFDTVRRRMMMQSGRKGADIMYTGTVDCWRKIAKDEGPKAFFKGAWSNVLRGMGGAFVLVLYDEIKKFV.

Residues 1 to 7 are Mitochondrial intermembrane-facing; the sequence is MSDQALS. Serine 2 bears the N-acetylserine mark. One copy of the Solcar 1 repeat lies at 6–98; the sequence is LSFLKDFLAG…FAFKDKYKQI (93 aa). Serine 7 carries the post-translational modification Phosphoserine. Residues 8–37 form a helical membrane-spanning segment; it reads FLKDFLAGGVAAAISKTAVAPIERVKLLLQ. Residues 38–74 are Mitochondrial matrix-facing; that stretch reads VQHASKQISAEKQYKGIIDCVVRIPKEQGFLSFWRGN. N6,N6,N6-trimethyllysine is present on lysine 52. At lysine 52 the chain carries N6-methyllysine. Residues 75 to 99 form a helical membrane-spanning segment; sequence LANVIRYFPTQALNFAFKDKYKQIF. Residues arginine 80 and lysine 92 each coordinate ADP. Topologically, residues 100–109 are mitochondrial intermembrane; that stretch reads LGGVDRHKQF. A helical membrane pass occupies residues 110–130; sequence WRYFAGNLASGGAAGATSLCF. Solcar repeat units follow at residues 111–201 and 212–297; these read RYFA…AKGM and VSWM…IKKF. Topologically, residues 131–178 are mitochondrial matrix; that stretch reads VYPLDFARTRLAADVGKGAAQREFTGLGNCITKIFKSDGLRGLYQGFN. The residue at position 147 (lysine 147) is an N6-succinyllysine. Cysteine 160 carries the post-translational modification S-nitrosocysteine. The helical transmembrane segment at 179–199 threads the bilayer; sequence VSVQGIIIYRAAYFGVYDTAK. At 200-210 the chain is on the mitochondrial intermembrane side; sequence GMLPDPKNVHI. The chain crosses the membrane as a helical span at residues 211–231; it reads IVSWMIAQTVTAVAGLVSYPF. The Mitochondrial matrix portion of the chain corresponds to 232–273; the sequence is DTVRRRMMMQSGRKGADIMYTGTVDCWRKIAKDEGPKAFFKG. Arginine 235 contacts ADP. Residues 235-240 are important for transport activity; sequence RRRMMM. Residues 235 to 240 carry the Nucleotide carrier signature motif motif; it reads RRRMMM. N6-succinyllysine is present on residues lysine 245 and lysine 272. Residues 274 to 291 form a helical membrane-spanning segment; that stretch reads AWSNVLRGMGGAFVLVLY. The Mitochondrial intermembrane segment spans residues 292–298; the sequence is DEIKKFV.

This sequence belongs to the mitochondrial carrier (TC 2.A.29) family. As to quaternary structure, monomer. Found in a complex with ARL2, ARL2BP and SLC25A4/ANT1. Interacts with ARL2BP. Interacts with TIMM44; leading to inhibit the presequence translocase TIMM23, thereby promoting stabilization of PINK1. Post-translationally, under cell death induction, transglutaminated by TGM2. Transglutamination leads to formation of covalent cross-links between a glutamine and the epsilon-amino group of a lysine residue, forming polymers. In terms of tissue distribution, detected in heart muscle (at protein level). Detected in heart.

Its subcellular location is the mitochondrion inner membrane. The protein localises to the membrane. The catalysed reaction is ADP(in) + ATP(out) = ADP(out) + ATP(in). It carries out the reaction H(+)(in) = H(+)(out). With respect to regulation, the matrix-open state (m-state) is inhibited by the membrane-permeable bongkrekic acid (BKA). The cytoplasmic-open state (c-state) is inhibited by the membrane-impermeable toxic inhibitor carboxyatractyloside (CATR). Proton transporter activity is inhibited by ADP:ATP antiporter activity. Its function is as follows. ADP:ATP antiporter that mediates import of ADP into the mitochondrial matrix for ATP synthesis, and export of ATP out to fuel the cell. Cycles between the cytoplasmic-open state (c-state) and the matrix-open state (m-state): operates by the alternating access mechanism with a single substrate-binding site intermittently exposed to either the cytosolic (c-state) or matrix (m-state) side of the inner mitochondrial membrane. In addition to its ADP:ATP antiporter activity, also involved in mitochondrial uncoupling and mitochondrial permeability transition pore (mPTP) activity. Plays a role in mitochondrial uncoupling by acting as a proton transporter: proton transport uncouples the proton flows via the electron transport chain and ATP synthase to reduce the efficiency of ATP production and cause mitochondrial thermogenesis. Proton transporter activity is inhibited by ADP:ATP antiporter activity, suggesting that SLC25A4/ANT1 acts as a master regulator of mitochondrial energy output by maintaining a delicate balance between ATP production (ADP:ATP antiporter activity) and thermogenesis (proton transporter activity). Proton transporter activity requires free fatty acids as cofactor, but does not transport it. Probably mediates mitochondrial uncoupling in tissues that do not express UCP1. Also plays a key role in mPTP opening, a non-specific pore that enables free passage of the mitochondrial membranes to solutes of up to 1.5 kDa, and which contributes to cell death. It is however unclear if SLC25A4/ANT1 constitutes a pore-forming component of mPTP or regulates it. Acts as a regulator of mitophagy independently of ADP:ATP antiporter activity: promotes mitophagy via interaction with TIMM44, leading to inhibit the presequence translocase TIMM23, thereby promoting stabilization of PINK1. The sequence is that of ADP/ATP translocase 1 from Bos taurus (Bovine).